Consider the following 404-residue polypeptide: Probable ketol-acid reductoisomerase, mitochondrial (404 aa).

The KARI N-terminal Rossmann domain maps to 63 to 253; sequence TKENVWERSD…AVGSGFIYQT (191 aa). Residues 91–100, 115–120, and 153–157 each bind NADP(+); these read GYGSQGHGQG, RKDGAS, and SDAAQ. His-178 is an active-site residue. The KARI C-terminal knotted domain occupies 254-401; sequence TFKKEVISDL…EVVRSLRPEH (148 aa). A Phosphoserine modification is found at Ser-261. Mg(2+) contacts are provided by Asp-262, Glu-266, Glu-298, and Glu-302. Ser-324 lines the substrate pocket.

Belongs to the ketol-acid reductoisomerase family. The cofactor is Mg(2+).

The protein localises to the mitochondrion. The enzyme catalyses (2R)-2,3-dihydroxy-3-methylbutanoate + NADP(+) = (2S)-2-acetolactate + NADPH + H(+). The catalysed reaction is (2R,3R)-2,3-dihydroxy-3-methylpentanoate + NADP(+) = (S)-2-ethyl-2-hydroxy-3-oxobutanoate + NADPH + H(+). It participates in amino-acid biosynthesis; L-isoleucine biosynthesis; L-isoleucine from 2-oxobutanoate: step 2/4. Its pathway is amino-acid biosynthesis; L-valine biosynthesis; L-valine from pyruvate: step 2/4. The chain is Probable ketol-acid reductoisomerase, mitochondrial (ilv5) from Schizosaccharomyces pombe (strain 972 / ATCC 24843) (Fission yeast).